A 219-amino-acid chain; its full sequence is Izumo sperm-egg fusion protein 4 (219 aa).

An N-terminal signal peptide occupies residues 1–15 (MALLLCLVGVTAALA). Residue asparagine 206 is glycosylated (N-linked (GlcNAc...) asparagine).

This sequence belongs to the Izumo family.

It localises to the secreted. The sequence is that of Izumo sperm-egg fusion protein 4 (IZUMO4) from Macaca fascicularis (Crab-eating macaque).